Consider the following 343-residue polypeptide: Multidrug resistance protein MdtN (343 aa).

Topologically, residues 1–12 (MESTPKKAPRSK) are cytoplasmic. A helical; Signal-anchor for type II membrane protein membrane pass occupies residues 13–33 (FPALLVVALALVALVFVIWRV). Over 34–343 (DSAPSTNDAY…ASAVANLEPQ (310 aa)) the chain is Periplasmic.

Belongs to the membrane fusion protein (MFP) (TC 8.A.1) family. Could be part of a tripartite efflux system composed of MdtN, MdtO and MdtP.

It localises to the cell inner membrane. Functionally, could be involved in resistance to puromycin, acriflavine and tetraphenylarsonium chloride. The polypeptide is Multidrug resistance protein MdtN (mdtN) (Escherichia coli O157:H7).